Consider the following 90-residue polypeptide: Progonadoliberin-3 (90 aa).

An N-terminal signal peptide occupies residues 1–23 (MDVSSKVVVQVLLLALVVQVTLC). Position 24 is a pyrrolidone carboxylic acid (glutamine 24). Glycine 33 carries the post-translational modification Glycine amide.

It belongs to the GnRH family. Expressed in neuron cell bodies of the nucleus olfactoretinalis.

The protein localises to the secreted. Its function is as follows. Stimulates the secretion of gonadotropins. The sequence is that of Progonadoliberin-3 (gnrh3) from Oryzias latipes (Japanese rice fish).